Consider the following 72-residue polypeptide: Large ribosomal subunit protein bL31 (72 aa).

4 residues coordinate Zn(2+): cysteine 16, cysteine 18, cysteine 38, and cysteine 41.

The protein belongs to the bacterial ribosomal protein bL31 family. Type A subfamily. Part of the 50S ribosomal subunit. It depends on Zn(2+) as a cofactor.

Its function is as follows. Binds the 23S rRNA. The polypeptide is Large ribosomal subunit protein bL31 (Aliivibrio fischeri (strain ATCC 700601 / ES114) (Vibrio fischeri)).